The primary structure comprises 568 residues: Urease subunit alpha (568 aa).

Positions 129 to 568 constitute a Urease domain; it reads GAIDSHIHFI…LPMAQRYFLF (440 aa). His-134, His-136, and Lys-217 together coordinate Ni(2+). The residue at position 217 (Lys-217) is an N6-carboxylysine. His-219 provides a ligand contact to substrate. Ni(2+) contacts are provided by His-246 and His-272. Catalysis depends on His-320, which acts as the Proton donor. Ni(2+) is bound at residue Asp-360.

It belongs to the metallo-dependent hydrolases superfamily. Urease alpha subunit family. In terms of assembly, heterotrimer of UreA (gamma), UreB (beta) and UreC (alpha) subunits. Three heterotrimers associate to form the active enzyme. Requires Ni cation as cofactor. Carboxylation allows a single lysine to coordinate two nickel ions.

The protein resides in the cytoplasm. It catalyses the reaction urea + 2 H2O + H(+) = hydrogencarbonate + 2 NH4(+). It participates in nitrogen metabolism; urea degradation; CO(2) and NH(3) from urea (urease route): step 1/1. This Saccharophagus degradans (strain 2-40 / ATCC 43961 / DSM 17024) protein is Urease subunit alpha.